The primary structure comprises 516 residues: uncharacterized protein (516 aa).

Helical transmembrane passes span 10–27 (IRYP…GYWI), 32–54 (IGAF…GDFA), 64–83 (SFLF…PQFV), 95–117 (LLAV…ILGL), and 165–187 (AVCY…PALL). RCK C-terminal domains are found at residues 208 to 291 (KPGL…SRAE) and 296 to 376 (RELL…NIGV). Transmembrane regions (helical) follow at residues 386–408 (FVVL…FPVG), 412–430 (IALS…VGHL), 443–465 (GAIS…IHAG), and 480–502 (LLGG…HFVL).

The protein belongs to the AAE transporter (TC 2.A.81) family.

The protein resides in the cell membrane. This is an uncharacterized protein from Bradyrhizobium diazoefficiens (strain JCM 10833 / BCRC 13528 / IAM 13628 / NBRC 14792 / USDA 110).